Here is an 806-residue protein sequence, read N- to C-terminus: NADH-quinone oxidoreductase subunit G (806 aa).

A 2Fe-2S ferredoxin-type domain is found at 15–93 (EMVTLTIDGV…DMVVRTQLTS (79 aa)). Positions 49, 60, 63, and 77 each coordinate [2Fe-2S] cluster. A 4Fe-4S His(Cys)3-ligated-type domain is found at 95 to 134 (IADKAQHGVMELLLINHPLDCPMCDKGGECPLQNQAMSNG). [4Fe-4S] cluster is bound by residues His-111, Cys-115, Cys-118, Cys-124, Cys-164, Cys-167, Cys-170, Cys-214, Cys-240, Cys-243, Cys-247, and Cys-275. The 4Fe-4S Mo/W bis-MGD-type domain occupies 233 to 289 (LVSSPSVCEHCASGCAQRTDHRRGKVLRRLAGDDPEVNEEWNCDKGRWAFTYATQPD).

This sequence belongs to the complex I 75 kDa subunit family. [2Fe-2S] cluster serves as cofactor. Requires [4Fe-4S] cluster as cofactor.

It catalyses the reaction a quinone + NADH + 5 H(+)(in) = a quinol + NAD(+) + 4 H(+)(out). In terms of biological role, NDH-1 shuttles electrons from NADH, via FMN and iron-sulfur (Fe-S) centers, to quinones in the respiratory chain. The immediate electron acceptor for the enzyme in this species is believed to be menaquinone. Couples the redox reaction to proton translocation (for every two electrons transferred, four hydrogen ions are translocated across the cytoplasmic membrane), and thus conserves the redox energy in a proton gradient. The protein is NADH-quinone oxidoreductase subunit G (nuoG) of Mycobacterium bovis (strain ATCC BAA-935 / AF2122/97).